Here is a 440-residue protein sequence, read N- to C-terminus: Thymidine phosphorylase (440 aa).

The protein belongs to the thymidine/pyrimidine-nucleoside phosphorylase family. In terms of assembly, homodimer.

It catalyses the reaction thymidine + phosphate = 2-deoxy-alpha-D-ribose 1-phosphate + thymine. The protein operates within pyrimidine metabolism; dTMP biosynthesis via salvage pathway; dTMP from thymine: step 1/2. Functionally, the enzymes which catalyze the reversible phosphorolysis of pyrimidine nucleosides are involved in the degradation of these compounds and in their utilization as carbon and energy sources, or in the rescue of pyrimidine bases for nucleotide synthesis. The chain is Thymidine phosphorylase from Shigella flexneri serotype 5b (strain 8401).